A 154-amino-acid chain; its full sequence is MASRRRSRELALQFLFSYDLNAAGAGDFDAWMEDFCARFNLSEKNFPHFFTLAQGVKNRWEKLNDLLAESSEHWKLSRMSGVDRNVMRIAIFEMLYCDDVPPRVAINEAIEIGKKYGTDESGAFINGVLDRINKELGGSEADLPENMNTTNSKE.

The protein belongs to the NusB family.

Its function is as follows. Involved in transcription antitermination. Required for transcription of ribosomal RNA (rRNA) genes. Binds specifically to the boxA antiterminator sequence of the ribosomal RNA (rrn) operons. This is Transcription antitermination protein NusB from Desulfosudis oleivorans (strain DSM 6200 / JCM 39069 / Hxd3) (Desulfococcus oleovorans).